Here is a 575-residue protein sequence, read N- to C-terminus: 2-isopropylmalate synthase (575 aa).

The Pyruvate carboxyltransferase domain maps to 40–314 (PRWCAVDLRD…DPQIDFSDID (275 aa)). Mg(2+) contacts are provided by aspartate 49, histidine 253, histidine 255, and asparagine 289. The regulatory domain stretch occupies residues 456-575 (SGSGTPEWGR…IVSAVNRALR (120 aa)).

This sequence belongs to the alpha-IPM synthase/homocitrate synthase family. LeuA type 2 subfamily. As to quaternary structure, homodimer. Mg(2+) is required as a cofactor.

It is found in the cytoplasm. The enzyme catalyses 3-methyl-2-oxobutanoate + acetyl-CoA + H2O = (2S)-2-isopropylmalate + CoA + H(+). It functions in the pathway amino-acid biosynthesis; L-leucine biosynthesis; L-leucine from 3-methyl-2-oxobutanoate: step 1/4. Functionally, catalyzes the condensation of the acetyl group of acetyl-CoA with 3-methyl-2-oxobutanoate (2-ketoisovalerate) to form 3-carboxy-3-hydroxy-4-methylpentanoate (2-isopropylmalate). The chain is 2-isopropylmalate synthase from Kineococcus radiotolerans (strain ATCC BAA-149 / DSM 14245 / SRS30216).